A 361-amino-acid polypeptide reads, in one-letter code: uncharacterized protein (361 aa).

Phosphothreonine is present on threonine 12.

Its subcellular location is the cytoplasm. The protein localises to the nucleus. This is an uncharacterized protein from Schizosaccharomyces pombe (strain 972 / ATCC 24843) (Fission yeast).